Reading from the N-terminus, the 289-residue chain is 33 kDa chaperonin (289 aa).

Cystine bridges form between Cys-237–Cys-239 and Cys-270–Cys-273.

Belongs to the HSP33 family. Post-translationally, under oxidizing conditions two disulfide bonds are formed involving the reactive cysteines. Under reducing conditions zinc is bound to the reactive cysteines and the protein is inactive.

It localises to the cytoplasm. Functionally, redox regulated molecular chaperone. Protects both thermally unfolding and oxidatively damaged proteins from irreversible aggregation. Plays an important role in the bacterial defense system toward oxidative stress. The sequence is that of 33 kDa chaperonin from Oceanobacillus iheyensis (strain DSM 14371 / CIP 107618 / JCM 11309 / KCTC 3954 / HTE831).